The primary structure comprises 130 residues: Small ribosomal subunit protein uS8 (130 aa).

This sequence belongs to the universal ribosomal protein uS8 family. As to quaternary structure, part of the 30S ribosomal subunit.

In terms of biological role, one of the primary rRNA binding proteins, it binds directly to 16S rRNA central domain where it helps coordinate assembly of the platform of the 30S subunit. This Haloquadratum walsbyi (strain DSM 16790 / HBSQ001) protein is Small ribosomal subunit protein uS8.